A 359-amino-acid polypeptide reads, in one-letter code: Peptide chain release factor 1 (359 aa).

Glutamine 234 carries the post-translational modification N5-methylglutamine.

The protein belongs to the prokaryotic/mitochondrial release factor family. Methylated by PrmC. Methylation increases the termination efficiency of RF1.

It localises to the cytoplasm. In terms of biological role, peptide chain release factor 1 directs the termination of translation in response to the peptide chain termination codons UAG and UAA. This chain is Peptide chain release factor 1, found in Clavibacter michiganensis subsp. michiganensis (strain NCPPB 382).